The primary structure comprises 361 residues: Histidinol-phosphate aminotransferase (361 aa).

N6-(pyridoxal phosphate)lysine is present on K224.

This sequence belongs to the class-II pyridoxal-phosphate-dependent aminotransferase family. Histidinol-phosphate aminotransferase subfamily. Homodimer. The cofactor is pyridoxal 5'-phosphate.

The catalysed reaction is L-histidinol phosphate + 2-oxoglutarate = 3-(imidazol-4-yl)-2-oxopropyl phosphate + L-glutamate. It functions in the pathway amino-acid biosynthesis; L-histidine biosynthesis; L-histidine from 5-phospho-alpha-D-ribose 1-diphosphate: step 7/9. In Limosilactobacillus fermentum (strain NBRC 3956 / LMG 18251) (Lactobacillus fermentum), this protein is Histidinol-phosphate aminotransferase.